A 247-amino-acid chain; its full sequence is OCIA domain-containing protein 1 (247 aa).

Positions 1 to 112 constitute an OCIA domain; that stretch reads MNGRADFREP…KKLENSPLGE (112 aa). Residues Ser-108 and Ser-116 each carry the phosphoserine modification. Positions 116 to 247 are disordered; it reads SGELRRSLPP…VNKYGDTWDE (132 aa). Polar residues-rich tracts occupy residues 136 to 146 and 168 to 177; these read SNVSGQSSFGT and ASMNESTPTG. Composition is skewed to basic and acidic residues over residues 192-210 and 218-240; these read DSPK…KNRE and HKTD…KVNK. Phosphoserine occurs at positions 193 and 198.

Belongs to the OCIAD1 family. Interacts with OCIAD2. Interacts with STAT3.

It localises to the endosome. Its function is as follows. Maintains stem cell potency. Increases STAT3 phosphorylation and controls ERK phosphorylation. May act as a scaffold, increasing STAT3 recruitment onto endosomes. The sequence is that of OCIA domain-containing protein 1 from Rattus norvegicus (Rat).